A 217-amino-acid chain; its full sequence is tRNA 5-hydroxyuridine methyltransferase (217 aa).

S-adenosyl-L-methionine is bound by residues Met-38, Ser-68, Glu-85, 113 to 114 (DA), and Asp-133. Asp-133, Asp-159, and Asn-160 together coordinate Mg(2+).

This sequence belongs to the class I-like SAM-binding methyltransferase superfamily. Cation-dependent O-methyltransferase family. In terms of assembly, homodimer.

It carries out the reaction 5-hydroxyuridine(34) in tRNA + S-adenosyl-L-methionine = 5-methoxyuridine(34) in tRNA + S-adenosyl-L-homocysteine + H(+). Its function is as follows. Catalyzes the methylation of 5-hydroxyuridine (ho5U) to form 5-methoxyuridine (mo5U) at position 34 in tRNAs. In Bacillus subtilis (strain 168), this protein is tRNA 5-hydroxyuridine methyltransferase.